We begin with the raw amino-acid sequence, 387 residues long: 3-ketoacyl-CoA thiolase (387 aa).

The active-site Acyl-thioester intermediate is the Cys-91. Catalysis depends on proton acceptor residues His-343 and Cys-373.

Belongs to the thiolase-like superfamily. Thiolase family. Heterotetramer of two alpha chains (FadB) and two beta chains (FadA).

It localises to the cytoplasm. The enzyme catalyses an acyl-CoA + acetyl-CoA = a 3-oxoacyl-CoA + CoA. Its pathway is lipid metabolism; fatty acid beta-oxidation. In terms of biological role, catalyzes the final step of fatty acid oxidation in which acetyl-CoA is released and the CoA ester of a fatty acid two carbons shorter is formed. In Vibrio vulnificus (strain CMCP6), this protein is 3-ketoacyl-CoA thiolase.